The sequence spans 580 residues: MKMKIAIVTACPSGVANSIIAAGLLQQASKTLGWEAYIECHSTVIAGHTLSEEEINKADLVILAANGKIDMQRFVGKKVYQSPITACTSDPVGYLKQAAEQATELSSEQATRCDSPATASVSAKKIVAITACPTGVAHTFMAAEALEAEATRQGHQIKVETRGSVGAKNQLTEQEIAAADLVIIAADIDVPLDRFNGKKLYKTSTGLTLKKTAQELSNAFAQAKTFSSSANSATNEKAEEKKGVYKHLMTGVSHMLPVVVAGGLIIALSFVFGIEAFKEEGTLAAALMQIGGGSAFALMIPVLAGYIAFSIADRPGLAPGLIGGMLASSTGAGFLGGIVAGFLAGYSAKFIADKVQLPQSMAALKPILIIPFIASLFTGLVMIYVVGGPMSSIMSGMTSFLNNMGSTNAILLGIVLGAMMCFDLGGPVNKAAYTFGVGLLASQTYAPMAAIMAAGMVPALGMGLATFIAKDKFEAGEREAGKASFVLGLCFISEGAIPFAAKDPMRVIPACMVGGAVTGALSMLFGAKLMAPHGGLFVLLIPNAISPVLLYLVAIAVGTAITGFGYAMLKKSAQAKAVAA.

PTS EIIB type-2 domains follow at residues 3–100 (MKIA…QAAE) and 124–221 (KKIV…NAFA). Catalysis depends on phosphocysteine intermediate; for EIIB activity residues Cys-11 and Cys-132. Residues Cys-11 and Cys-132 each carry the phosphocysteine; by EIIA modification. A PTS EIIC type-2 domain is found at 244 to 579 (VYKHLMTGVS…KKSAQAKAVA (336 aa)). The next 9 helical transmembrane spans lie at 254–274 (HMLP…VFGI), 292–312 (GGSA…FSIA), 322–342 (IGGM…VAGF), 367–387 (ILII…YVVG), 408–428 (NAIL…GGPV), 448–468 (MAAI…ATFI), 480–500 (AGKA…IPFA), 507–527 (VIPA…LFGA), and 537–557 (FVLL…AIAV).

Its subcellular location is the cell inner membrane. The enzyme catalyses D-fructose(out) + N(pros)-phospho-L-histidyl-[protein] = D-fructose 1-phosphate(in) + L-histidyl-[protein]. Its function is as follows. The phosphoenolpyruvate-dependent sugar phosphotransferase system (sugar PTS), a major carbohydrate active transport system, catalyzes the phosphorylation of incoming sugar substrates concomitantly with their translocation across the cell membrane. The enzyme II FruAB PTS system is involved in fructose transport. The chain is PTS system fructose-specific EIIB'BC component from Vibrio cholerae serotype O1 (strain ATCC 39315 / El Tor Inaba N16961).